Consider the following 355-residue polypeptide: Holliday junction branch migration complex subunit RuvB (355 aa).

The large ATPase domain (RuvB-L) stretch occupies residues 4-190 (TDKLAAERII…FGIVARLEFY (187 aa)). Residues leucine 29, arginine 30, glycine 71, lysine 74, threonine 75, threonine 76, 137 to 139 (EDY), arginine 180, tyrosine 190, and arginine 227 each bind ATP. Mg(2+) is bound at residue threonine 75. The segment at 191–261 (DAEQLSRIVR…VADAALAMLD (71 aa)) is small ATPAse domain (RuvB-S). Residues 264-355 (PVGFDLMDRK…GSMWNTPDGA (92 aa)) form a head domain (RuvB-H) region. DNA-binding residues include arginine 300, arginine 319, and arginine 324.

Belongs to the RuvB family. Homohexamer. Forms an RuvA(8)-RuvB(12)-Holliday junction (HJ) complex. HJ DNA is sandwiched between 2 RuvA tetramers; dsDNA enters through RuvA and exits via RuvB. An RuvB hexamer assembles on each DNA strand where it exits the tetramer. Each RuvB hexamer is contacted by two RuvA subunits (via domain III) on 2 adjacent RuvB subunits; this complex drives branch migration. In the full resolvosome a probable DNA-RuvA(4)-RuvB(12)-RuvC(2) complex forms which resolves the HJ.

The protein resides in the cytoplasm. The enzyme catalyses ATP + H2O = ADP + phosphate + H(+). Functionally, the RuvA-RuvB-RuvC complex processes Holliday junction (HJ) DNA during genetic recombination and DNA repair, while the RuvA-RuvB complex plays an important role in the rescue of blocked DNA replication forks via replication fork reversal (RFR). RuvA specifically binds to HJ cruciform DNA, conferring on it an open structure. The RuvB hexamer acts as an ATP-dependent pump, pulling dsDNA into and through the RuvAB complex. RuvB forms 2 homohexamers on either side of HJ DNA bound by 1 or 2 RuvA tetramers; 4 subunits per hexamer contact DNA at a time. Coordinated motions by a converter formed by DNA-disengaged RuvB subunits stimulates ATP hydrolysis and nucleotide exchange. Immobilization of the converter enables RuvB to convert the ATP-contained energy into a lever motion, pulling 2 nucleotides of DNA out of the RuvA tetramer per ATP hydrolyzed, thus driving DNA branch migration. The RuvB motors rotate together with the DNA substrate, which together with the progressing nucleotide cycle form the mechanistic basis for DNA recombination by continuous HJ branch migration. Branch migration allows RuvC to scan DNA until it finds its consensus sequence, where it cleaves and resolves cruciform DNA. The protein is Holliday junction branch migration complex subunit RuvB of Burkholderia vietnamiensis (strain G4 / LMG 22486) (Burkholderia cepacia (strain R1808)).